We begin with the raw amino-acid sequence, 358 residues long: Isopentenyl-diphosphate delta-isomerase (358 aa).

12-13 (RK) contributes to the substrate binding site. FMN contacts are provided by residues 69–71 (AMT), Ser-99, and Asn-128. A substrate-binding site is contributed by Gln-158. Glu-159 lines the Mg(2+) pocket. FMN-binding positions include Lys-190, Thr-220, 267 to 269 (GIR), and 288 to 289 (AG).

The protein belongs to the IPP isomerase type 2 family. As to quaternary structure, homooctamer. Dimer of tetramers. FMN serves as cofactor. It depends on NADPH as a cofactor. The cofactor is Mg(2+).

The protein localises to the cytoplasm. The enzyme catalyses isopentenyl diphosphate = dimethylallyl diphosphate. Its function is as follows. Involved in the biosynthesis of isoprenoids. Catalyzes the 1,3-allylic rearrangement of the homoallylic substrate isopentenyl (IPP) to its allylic isomer, dimethylallyl diphosphate (DMAPP). This is Isopentenyl-diphosphate delta-isomerase from Listeria monocytogenes serotype 4a (strain HCC23).